The chain runs to 296 residues: Probable transcription factor At1g44810 (296 aa).

Residues 1 to 119 (MNKKLLNPLE…AKKVSGDDDN (119 aa)) form a disordered region. Residues 19-28 (EDVDEEISSG) are compositionally biased toward acidic residues. Over residues 52-72 (TQTLNSPSTEAPTLDSGSETN) the composition is skewed to polar residues. Over residues 97–119 (RASEGTSSKDIKRAKKVSGDDDN) the composition is skewed to basic and acidic residues.

Belongs to the GeBP family.

The chain is Probable transcription factor At1g44810 from Arabidopsis thaliana (Mouse-ear cress).